Reading from the N-terminus, the 366-residue chain is MVVLGSTGSIGKNALKIAKKFGVEIEALSCGKNIALINEQIQVFKPKKVAVLDPNDLNNLEPLGAEVFVGLEGIDAMIEECASNLVLNAIVGVAGLRASFKSLQRNKKLALANKESLVSAGHLLDISQITPIDSEHFGLWALLQNKTLKPKSLIISASGGAFRDTPLELIAIQNAQNALKHPNWSMGSKITIDSASMVNKLFEILETYWLFGASLKIDALIERSSIVHALVEFEDNSVIAHLASADMKLPISYAINPKLASLNASIKPLDLYALSAIKFEPISMERYTLWRYKDLLLENPKLGVVLNASNEVAMKKFLNQEIAFGGFIQIISQALELYAKKSFKFSTLDEVLELDKEVRDRFKNYR.

Residues threonine 7, glycine 8, serine 9, isoleucine 10, glycine 31, lysine 32, asparagine 33, and asparagine 113 each coordinate NADPH. Position 114 (lysine 114) interacts with 1-deoxy-D-xylulose 5-phosphate. NADPH is bound at residue glutamate 115. Mn(2+) is bound at residue aspartate 133. 1-deoxy-D-xylulose 5-phosphate-binding residues include serine 134, glutamate 135, serine 158, and histidine 181. Residue glutamate 135 participates in Mn(2+) binding. Glycine 187 provides a ligand contact to NADPH. Residues serine 194, asparagine 199, lysine 200, and glutamate 203 each contribute to the 1-deoxy-D-xylulose 5-phosphate site. A Mn(2+)-binding site is contributed by glutamate 203.

It belongs to the DXR family. Mg(2+) serves as cofactor. Mn(2+) is required as a cofactor.

It carries out the reaction 2-C-methyl-D-erythritol 4-phosphate + NADP(+) = 1-deoxy-D-xylulose 5-phosphate + NADPH + H(+). Its pathway is isoprenoid biosynthesis; isopentenyl diphosphate biosynthesis via DXP pathway; isopentenyl diphosphate from 1-deoxy-D-xylulose 5-phosphate: step 1/6. Functionally, catalyzes the NADPH-dependent rearrangement and reduction of 1-deoxy-D-xylulose-5-phosphate (DXP) to 2-C-methyl-D-erythritol 4-phosphate (MEP). This chain is 1-deoxy-D-xylulose 5-phosphate reductoisomerase, found in Helicobacter pylori (strain G27).